A 213-amino-acid chain; its full sequence is 3,4-dihydroxy-2-butanone 4-phosphate synthase (213 aa).

Residues 27 to 28 (RE), Asp32, 140 to 144 (RTGHT), and Glu164 each bind D-ribulose 5-phosphate. Glu28 is a binding site for Mg(2+). His143 is a binding site for Mg(2+).

This sequence belongs to the DHBP synthase family. In terms of assembly, homodimer. It depends on Mg(2+) as a cofactor. Mn(2+) is required as a cofactor.

The enzyme catalyses D-ribulose 5-phosphate = (2S)-2-hydroxy-3-oxobutyl phosphate + formate + H(+). The protein operates within cofactor biosynthesis; riboflavin biosynthesis; 2-hydroxy-3-oxobutyl phosphate from D-ribulose 5-phosphate: step 1/1. Catalyzes the conversion of D-ribulose 5-phosphate to formate and 3,4-dihydroxy-2-butanone 4-phosphate. The polypeptide is 3,4-dihydroxy-2-butanone 4-phosphate synthase (Agrobacterium fabrum (strain C58 / ATCC 33970) (Agrobacterium tumefaciens (strain C58))).